A 27-amino-acid chain; its full sequence is Histone H1.3, embryonic (27 aa).

An H15 domain is found at 1-27 (HVVAAITALKERGGSSHQALKKYKAAN).

This sequence belongs to the histone H1/H5 family.

The protein localises to the nucleus. Its subcellular location is the chromosome. Histones H1 are necessary for the condensation of nucleosome chains into higher-order structures. In Parechinus angulosus (Angulate sea urchin), this protein is Histone H1.3, embryonic.